A 181-amino-acid chain; its full sequence is Adenine phosphoribosyltransferase (181 aa).

This sequence belongs to the purine/pyrimidine phosphoribosyltransferase family. As to quaternary structure, homodimer.

It localises to the cytoplasm. It carries out the reaction AMP + diphosphate = 5-phospho-alpha-D-ribose 1-diphosphate + adenine. Its pathway is purine metabolism; AMP biosynthesis via salvage pathway; AMP from adenine: step 1/1. Its function is as follows. Catalyzes a salvage reaction resulting in the formation of AMP, that is energically less costly than de novo synthesis. This is Adenine phosphoribosyltransferase from Chelativorans sp. (strain BNC1).